A 146-amino-acid polypeptide reads, in one-letter code: Snaclec rhodocytin subunit beta (146 aa).

The N-terminal stretch at 1-23 (MGRFIFVSFGLLVVFLSLSGTGA) is a signal peptide. 3 disulfide bridges follow: Cys-25–Cys-36, Cys-53–Cys-142, and Cys-119–Cys-134. In terms of domain architecture, C-type lectin spans 32 to 143 (YEGHCYKPFN…CSSTCSFVCK (112 aa)).

The protein belongs to the snaclec family. Dimer (non-covalently linked) of heterodimers of subunits alpha and beta (disulfide-linked). In terms of tissue distribution, expressed by the venom gland.

The protein localises to the secreted. Its function is as follows. Elicits platelet aggregation by the binding to the C-type lectin domain family 1 member B (CLEC1B/CLEC2). Binding leads to tyrosine phosphorylation in the cytoplasmic tail of CLEC1B, which promotes the binding of spleen tyrosine kinase (Syk), subsequent activation of PLCgamma2, and platelet activation and aggregation. Binding to GPIbalpha (GP1BA) and alpha2/beta-1 (ITGA2/ITGB1) may also induce aggregation, but this is controversial. This chain is Snaclec rhodocytin subunit beta, found in Calloselasma rhodostoma (Malayan pit viper).